Reading from the N-terminus, the 472-residue chain is Adenosylhomocysteinase (472 aa).

Residues T62, D137, and E197 each coordinate substrate. 198–200 (TTT) lines the NAD(+) pocket. Residues K227 and D231 each contribute to the substrate site. Residues N232, 261 to 266 (GYGDVG), E284, N319, 340 to 342 (IGH), and N385 each bind NAD(+).

It belongs to the adenosylhomocysteinase family. NAD(+) is required as a cofactor.

The protein resides in the cytoplasm. The enzyme catalyses S-adenosyl-L-homocysteine + H2O = L-homocysteine + adenosine. It participates in amino-acid biosynthesis; L-homocysteine biosynthesis; L-homocysteine from S-adenosyl-L-homocysteine: step 1/1. Its function is as follows. May play a key role in the regulation of the intracellular concentration of adenosylhomocysteine. The protein is Adenosylhomocysteinase of Bordetella petrii (strain ATCC BAA-461 / DSM 12804 / CCUG 43448).